Here is a 310-residue protein sequence, read N- to C-terminus: Methionyl-tRNA formyltransferase (310 aa).

(6S)-5,6,7,8-tetrahydrofolate is bound at residue 109-112; that stretch reads SLLP.

This sequence belongs to the Fmt family.

It carries out the reaction L-methionyl-tRNA(fMet) + (6R)-10-formyltetrahydrofolate = N-formyl-L-methionyl-tRNA(fMet) + (6S)-5,6,7,8-tetrahydrofolate + H(+). In terms of biological role, attaches a formyl group to the free amino group of methionyl-tRNA(fMet). The formyl group appears to play a dual role in the initiator identity of N-formylmethionyl-tRNA by promoting its recognition by IF2 and preventing the misappropriation of this tRNA by the elongation apparatus. This Agathobacter rectalis (strain ATCC 33656 / DSM 3377 / JCM 17463 / KCTC 5835 / VPI 0990) (Eubacterium rectale) protein is Methionyl-tRNA formyltransferase.